Here is a 341-residue protein sequence, read N- to C-terminus: HTH-type transcriptional repressor PurR (341 aa).

Positions 2–56 constitute an HTH lacI-type domain; that stretch reads ATIKDVAKRAGVSTTTVSHVINKTRFVAEETKAAVRAAIKELHYSPSAVARSLKV. The segment at residues 4-23 is a DNA-binding region (H-T-H motif); sequence IKDVAKRAGVSTTTVSHVIN. Residues 48-56 mediate DNA binding; sequence SAVARSLKV. The hypoxanthine site is built by Tyr73, Arg190, Thr192, Phe221, and Asp275.

In terms of assembly, homodimer.

Its pathway is purine metabolism; purine nucleotide biosynthesis [regulation]. In terms of biological role, is the main repressor of the genes involved in the de novo synthesis of purine nucleotides, regulating purB, purC, purEK, purF, purHD, purL, purMN and guaBA expression. PurR is allosterically activated to bind its cognate DNA by binding the purine corepressors, hypoxanthine or guanine, thereby effecting transcription repression. The sequence is that of HTH-type transcriptional repressor PurR from Pectobacterium atrosepticum (strain SCRI 1043 / ATCC BAA-672) (Erwinia carotovora subsp. atroseptica).